Consider the following 1073-residue polypeptide: Carbamoyl phosphate synthase large chain (1073 aa).

A carboxyphosphate synthetic domain region spans residues 1-399 (MPKREDIKKV…SLLKAFKSLD (399 aa)). ATP contacts are provided by R129, R169, G175, G176, E208, V210, E215, G241, V242, H243, Q284, and E296. One can recognise an ATP-grasp 1 domain in the interval 133–325 (KETMLSIGEK…IARVTAKIAI (193 aa)). Mg(2+) contacts are provided by Q284, E296, and N298. Mn(2+) contacts are provided by Q284, E296, and N298. Residues 400–540 (IDNQLGIKRW…YSTYEDTCET (141 aa)) are oligomerization domain. The tract at residues 541 to 931 (NSTDKKKILI…YKAELAADNL (391 aa)) is carbamoyl phosphate synthetic domain. The ATP-grasp 2 domain occupies 672–863 (YLLMQELGIP…LAKIAAKVIA (192 aa)). Positions 708, 747, 749, 754, 779, 780, 781, 782, 822, and 834 each coordinate ATP. Residues Q822, E834, and N836 each coordinate Mg(2+). Q822, E834, and N836 together coordinate Mn(2+). An MGS-like domain is found at 930 to 1071 (NLLPLTGKVF…NEYHKEMEQK (142 aa)). The tract at residues 932 to 1073 (LPLTGKVFLS…YHKEMEQKEE (142 aa)) is allosteric domain.

It belongs to the CarB family. As to quaternary structure, composed of two chains; the small (or glutamine) chain promotes the hydrolysis of glutamine to ammonia, which is used by the large (or ammonia) chain to synthesize carbamoyl phosphate. Tetramer of heterodimers (alpha,beta)4. The cofactor is Mg(2+). Mn(2+) is required as a cofactor.

The catalysed reaction is hydrogencarbonate + L-glutamine + 2 ATP + H2O = carbamoyl phosphate + L-glutamate + 2 ADP + phosphate + 2 H(+). It carries out the reaction hydrogencarbonate + NH4(+) + 2 ATP = carbamoyl phosphate + 2 ADP + phosphate + 2 H(+). It participates in amino-acid biosynthesis; L-arginine biosynthesis; carbamoyl phosphate from bicarbonate: step 1/1. The protein operates within pyrimidine metabolism; UMP biosynthesis via de novo pathway; (S)-dihydroorotate from bicarbonate: step 1/3. In terms of biological role, large subunit of the glutamine-dependent carbamoyl phosphate synthetase (CPSase). CPSase catalyzes the formation of carbamoyl phosphate from the ammonia moiety of glutamine, carbonate, and phosphate donated by ATP, constituting the first step of 2 biosynthetic pathways, one leading to arginine and/or urea and the other to pyrimidine nucleotides. The large subunit (synthetase) binds the substrates ammonia (free or transferred from glutamine from the small subunit), hydrogencarbonate and ATP and carries out an ATP-coupled ligase reaction, activating hydrogencarbonate by forming carboxy phosphate which reacts with ammonia to form carbamoyl phosphate. The sequence is that of Carbamoyl phosphate synthase large chain from Methanosarcina mazei (strain ATCC BAA-159 / DSM 3647 / Goe1 / Go1 / JCM 11833 / OCM 88) (Methanosarcina frisia).